The chain runs to 237 residues: Uridylate kinase (237 aa).

11–14 (KLSG) is a binding site for ATP. Gly53 serves as a coordination point for UMP. ATP-binding residues include Gly54 and Arg58. Residues Asp73 and 134–141 (TGNPFFTT) contribute to the UMP site. ATP-binding residues include Thr161, Tyr167, and Asp170.

Belongs to the UMP kinase family. As to quaternary structure, homohexamer.

It localises to the cytoplasm. The catalysed reaction is UMP + ATP = UDP + ADP. It participates in pyrimidine metabolism; CTP biosynthesis via de novo pathway; UDP from UMP (UMPK route): step 1/1. Its activity is regulated as follows. Inhibited by UTP. Its function is as follows. Catalyzes the reversible phosphorylation of UMP to UDP. The chain is Uridylate kinase from Burkholderia vietnamiensis (strain G4 / LMG 22486) (Burkholderia cepacia (strain R1808)).